The primary structure comprises 457 residues: Squalene epoxidase erg1 (457 aa).

FAD-binding positions include 15-16 (IT), 35-36 (ER), R43, R114, V130, D293, and M306. The next 3 helical transmembrane spans lie at 347–364 (GYSF…KLFT), 409–429 (FYAV…ALLM), and 433–453 (IIES…YILS).

Belongs to the squalene monooxygenase family. FAD is required as a cofactor.

The protein localises to the microsome membrane. Its subcellular location is the endoplasmic reticulum membrane. It localises to the vacuole membrane. It catalyses the reaction squalene + reduced [NADPH--hemoprotein reductase] + O2 = (S)-2,3-epoxysqualene + oxidized [NADPH--hemoprotein reductase] + H2O + H(+). The protein operates within terpene metabolism; lanosterol biosynthesis; lanosterol from farnesyl diphosphate: step 2/3. It functions in the pathway steroid metabolism; ergosterol biosynthesis. Its activity is regulated as follows. Activity is blocked by the allylamine class antifungal terbinafine. Its function is as follows. Squalene epoxidase; part of the third module of ergosterol biosynthesis pathway that includes by the late steps of the pathway. Erg1 catalyzes the epoxidation of squalene into 2,3-epoxysqualene. The third module or late pathway involves the ergosterol synthesis itself through consecutive reactions that mainly occur in the endoplasmic reticulum (ER) membrane. Firstly, the squalene synthase erg9 catalyzes the condensation of 2 farnesyl pyrophosphate moieties to form squalene, which is the precursor of all steroids. Secondly, squalene is converted into lanosterol by the consecutive action of the squalene epoxidase erg1 and the lanosterol synthase erg7. The lanosterol 14-alpha-demethylase erg11/cyp1 catalyzes C14-demethylation of lanosterol to produce 4,4'-dimethyl cholesta-8,14,24-triene-3-beta-ol. In the next steps, a complex process involving various demethylation, reduction and desaturation reactions catalyzed by the C-14 reductase erg24 and the C-4 demethylation complex erg25-erg26-erg27 leads to the production of zymosterol. Erg28 likely functions in the C-4 demethylation complex reaction by tethering erg26 and Erg27 to the endoplasmic reticulum or to facilitate interaction between these proteins. Then, the sterol 24-C-methyltransferase erg6 catalyzes the methyl transfer from S-adenosyl-methionine to the C-24 of zymosterol to form fecosterol. The C-8 sterol isomerase erg2 catalyzes the reaction which results in unsaturation at C-7 in the B ring of sterols and thus converts fecosterol to episterol. The sterol-C5-desaturases erg31 and erg32 then catalyze the introduction of a C-5 double bond in the B ring to produce 5-dehydroepisterol. The C-22 sterol desaturase erg5 further converts 5-dehydroepisterol into ergosta-5,7,22,24(28)-tetraen-3beta-ol by forming the C-22(23) double bond in the sterol side chain. Finally, ergosta-5,7,22,24(28)-tetraen-3beta-ol is substrate of the C-24(28) sterol reductase erg4 to produce ergosterol. In the genus Schizosaccharomyces, a second route exists between lanosterol and fecosterol, via the methylation of lanosterol to eburicol by erg6, followed by C14-demethylation by erg11/cyp1 and C4-demethylation by the demethylation complex erg25-erg26-erg27. The chain is Squalene epoxidase erg1 from Schizosaccharomyces pombe (strain 972 / ATCC 24843) (Fission yeast).